The following is a 124-amino-acid chain: MATINQLVRKPRSMKVAKSNVPALDACPQKRGVCTRVYTTTPKKPNSALRKVCRVRLTNGFEVTSYIGGEGHNLQEHSVILIRGGRVKDLPGVRYHTVRGALDCSGVKDRKQGRSKYGVKKPKA.

Residue D89 is modified to 3-methylthioaspartic acid.

The protein belongs to the universal ribosomal protein uS12 family. As to quaternary structure, part of the 30S ribosomal subunit. Contacts proteins S8 and S17. May interact with IF1 in the 30S initiation complex.

With S4 and S5 plays an important role in translational accuracy. In terms of biological role, interacts with and stabilizes bases of the 16S rRNA that are involved in tRNA selection in the A site and with the mRNA backbone. Located at the interface of the 30S and 50S subunits, it traverses the body of the 30S subunit contacting proteins on the other side and probably holding the rRNA structure together. The combined cluster of proteins S8, S12 and S17 appears to hold together the shoulder and platform of the 30S subunit. In Sodalis glossinidius (strain morsitans), this protein is Small ribosomal subunit protein uS12.